The chain runs to 281 residues: Arabinose operon regulatory protein (281 aa).

Alpha-L-arabinopyanose-binding residues include Pro-8, Thr-24, Arg-38, Tyr-82, and His-93. The 100-residue stretch at Arg-180–Gly-279 folds into the HTH araC/xylS-type domain. 2 consecutive DNA-binding regions (H-T-H motif) follow at residues Ala-198–Leu-219 and Ile-246–Thr-269.

Homodimer.

Its subcellular location is the cytoplasm. Transcription factor that regulates the expression of several genes involved in the transport and metabolism of L-arabinose. This chain is Arabinose operon regulatory protein, found in Salmonella typhimurium (strain LT2 / SGSC1412 / ATCC 700720).